The sequence spans 95 residues: Aspartyl/glutamyl-tRNA(Asn/Gln) amidotransferase subunit C (95 aa).

The protein belongs to the GatC family. Heterotrimer of A, B and C subunits.

It catalyses the reaction L-glutamyl-tRNA(Gln) + L-glutamine + ATP + H2O = L-glutaminyl-tRNA(Gln) + L-glutamate + ADP + phosphate + H(+). The catalysed reaction is L-aspartyl-tRNA(Asn) + L-glutamine + ATP + H2O = L-asparaginyl-tRNA(Asn) + L-glutamate + ADP + phosphate + 2 H(+). Functionally, allows the formation of correctly charged Asn-tRNA(Asn) or Gln-tRNA(Gln) through the transamidation of misacylated Asp-tRNA(Asn) or Glu-tRNA(Gln) in organisms which lack either or both of asparaginyl-tRNA or glutaminyl-tRNA synthetases. The reaction takes place in the presence of glutamine and ATP through an activated phospho-Asp-tRNA(Asn) or phospho-Glu-tRNA(Gln). The polypeptide is Aspartyl/glutamyl-tRNA(Asn/Gln) amidotransferase subunit C (Gluconobacter oxydans (strain 621H) (Gluconobacter suboxydans)).